Reading from the N-terminus, the 242-residue chain is Probable transcriptional regulatory protein NGO_1291 (242 aa).

Belongs to the TACO1 family.

It localises to the cytoplasm. In Neisseria gonorrhoeae (strain ATCC 700825 / FA 1090), this protein is Probable transcriptional regulatory protein NGO_1291.